A 66-amino-acid polypeptide reads, in one-letter code: Large ribosomal subunit protein uL29 (66 aa).

The protein belongs to the universal ribosomal protein uL29 family.

The chain is Large ribosomal subunit protein uL29 from Borrelia turicatae (strain 91E135).